The primary structure comprises 312 residues: Methionyl-tRNA formyltransferase (312 aa).

109 to 112 provides a ligand contact to (6S)-5,6,7,8-tetrahydrofolate; sequence SLLP.

It belongs to the Fmt family.

The catalysed reaction is L-methionyl-tRNA(fMet) + (6R)-10-formyltetrahydrofolate = N-formyl-L-methionyl-tRNA(fMet) + (6S)-5,6,7,8-tetrahydrofolate + H(+). Functionally, attaches a formyl group to the free amino group of methionyl-tRNA(fMet). The formyl group appears to play a dual role in the initiator identity of N-formylmethionyl-tRNA by promoting its recognition by IF2 and preventing the misappropriation of this tRNA by the elongation apparatus. The sequence is that of Methionyl-tRNA formyltransferase from Anaeromyxobacter dehalogenans (strain 2CP-1 / ATCC BAA-258).